A 190-amino-acid polypeptide reads, in one-letter code: Probable RNA-binding protein 18 (190 aa).

Residues His25–Ala106 form the RRM domain.

This chain is Probable RNA-binding protein 18 (rbm18), found in Xenopus laevis (African clawed frog).